An 84-amino-acid chain; its full sequence is Large ribosomal subunit protein bL27 (84 aa).

Belongs to the bacterial ribosomal protein bL27 family.

The polypeptide is Large ribosomal subunit protein bL27 (Campylobacter jejuni subsp. jejuni serotype O:6 (strain 81116 / NCTC 11828)).